We begin with the raw amino-acid sequence, 72 residues long: Translation initiation factor IF-1 (72 aa).

One can recognise an S1-like domain in the interval 1–72 (MAKEDVIEMQ…SKGRIVFRAR (72 aa)).

Belongs to the IF-1 family. Component of the 30S ribosomal translation pre-initiation complex which assembles on the 30S ribosome in the order IF-2 and IF-3, IF-1 and N-formylmethionyl-tRNA(fMet); mRNA recruitment can occur at any time during PIC assembly.

Its subcellular location is the cytoplasm. Its function is as follows. One of the essential components for the initiation of protein synthesis. Stabilizes the binding of IF-2 and IF-3 on the 30S subunit to which N-formylmethionyl-tRNA(fMet) subsequently binds. Helps modulate mRNA selection, yielding the 30S pre-initiation complex (PIC). Upon addition of the 50S ribosomal subunit IF-1, IF-2 and IF-3 are released leaving the mature 70S translation initiation complex. This chain is Translation initiation factor IF-1, found in Photobacterium profundum (strain SS9).